Here is a 458-residue protein sequence, read N- to C-terminus: ATP synthase subunit beta (458 aa).

Position 148–155 (148–155 (GGAGVGKT)) interacts with ATP.

The protein belongs to the ATPase alpha/beta chains family. As to quaternary structure, F-type ATPases have 2 components, CF(1) - the catalytic core - and CF(0) - the membrane proton channel. CF(1) has five subunits: alpha(3), beta(3), gamma(1), delta(1), epsilon(1). CF(0) has three main subunits: a(1), b(2) and c(9-12). The alpha and beta chains form an alternating ring which encloses part of the gamma chain. CF(1) is attached to CF(0) by a central stalk formed by the gamma and epsilon chains, while a peripheral stalk is formed by the delta and b chains.

The protein resides in the cell inner membrane. It carries out the reaction ATP + H2O + 4 H(+)(in) = ADP + phosphate + 5 H(+)(out). In terms of biological role, produces ATP from ADP in the presence of a proton gradient across the membrane. The catalytic sites are hosted primarily by the beta subunits. This Laribacter hongkongensis (strain HLHK9) protein is ATP synthase subunit beta.